We begin with the raw amino-acid sequence, 443 residues long: Proline--tRNA ligase (443 aa).

It belongs to the class-II aminoacyl-tRNA synthetase family. ProS type 2 subfamily. In terms of assembly, homodimer.

It is found in the cytoplasm. It catalyses the reaction tRNA(Pro) + L-proline + ATP = L-prolyl-tRNA(Pro) + AMP + diphosphate. Catalyzes the attachment of proline to tRNA(Pro) in a two-step reaction: proline is first activated by ATP to form Pro-AMP and then transferred to the acceptor end of tRNA(Pro). The chain is Proline--tRNA ligase from Caulobacter vibrioides (strain ATCC 19089 / CIP 103742 / CB 15) (Caulobacter crescentus).